A 229-amino-acid chain; its full sequence is Peroxiredoxin-like 2A (229 aa).

The segment at 14–112 (MWSIGAGALG…DQLGVPLYAV (99 aa)) is thioredoxin fold. Active-site redox-active residues include Cys-85 and Cys-88.

The protein belongs to the peroxiredoxin-like PRXL2 family. PRXL2A subfamily. Expressed in CSF1 and TNFSF11-stimulated CD14(+) peripheral blood mononuclear cells (PBMCs).

It localises to the cytoplasm. The protein localises to the secreted. Involved in redox regulation of the cell. Acts as an antioxidant. Inhibits TNFSF11-induced NFKB1 and JUN activation and osteoclast differentiation. May affect bone resorption and help to maintain bone mass. Acts as a negative regulator of macrophage-mediated inflammation by inhibiting macrophage production of inflammatory cytokines, probably through suppression of the MAPK signaling pathway. The chain is Peroxiredoxin-like 2A from Homo sapiens (Human).